Reading from the N-terminus, the 213-residue chain is Motile sperm domain-containing protein 1 (213 aa).

The MSP domain maps to 16–143; it reads PVFVFPTELI…KEHLTESLFF (128 aa). The next 2 helical transmembrane spans lie at 159 to 179 and 191 to 211; these read SLLT…PTLG and LSVN…MAIF. A Nuclear export signal motif is present at residues 205–208; sequence LITM.

The protein resides in the endoplasmic reticulum membrane. Its subcellular location is the golgi apparatus membrane. In terms of biological role, plays a role in differentiation and/or proliferation of mesenchymal stem cells. Proposed to be involved in epithelial-to-mesenchymal transition (EMT). However, another study suggests that it is not required for EMT or stem cell self-renewal and acts during later stages of differentiation. The polypeptide is Motile sperm domain-containing protein 1 (MOSPD1) (Bos taurus (Bovine)).